The chain runs to 650 residues: Chaperone protein DnaK (650 aa).

A Phosphothreonine; by autocatalysis modification is found at threonine 200. The interval alanine 614–alanine 635 is disordered.

The protein belongs to the heat shock protein 70 family.

In terms of biological role, acts as a chaperone. In Burkholderia lata (strain ATCC 17760 / DSM 23089 / LMG 22485 / NCIMB 9086 / R18194 / 383), this protein is Chaperone protein DnaK.